We begin with the raw amino-acid sequence, 503 residues long: Proton-coupled zinc antiporter SLC30A1 (503 aa).

Over 1–10 (MGCWGRNRGR) the chain is Cytoplasmic. The chain crosses the membrane as a helical span at residues 11–31 (LLCMLLLTFMFMVLEVVVSRV). Residues 32–35 (TASL) lie on the Extracellular side of the membrane. The chain crosses the membrane as a helical span at residues 36-56 (AMLSDSFHMLSDVLALVVALV). Residues histidine 43 and aspartate 47 each contribute to the Zn(2+) site. Residues 57–78 (AERFARRTHATQKNTFGWIRAE) are Cytoplasmic-facing. A helical membrane pass occupies residues 79 to 99 (VMGALVNAIFLTGLCFAILLE). Residues 100-113 (AVERFIEPHEMQQP) lie on the Extracellular side of the membrane. The chain crosses the membrane as a helical span at residues 114 to 134 (LVVLSVGVAGLLVNVLGLCLF). The Cytoplasmic segment spans residues 135–243 (HHHSGEGQGA…RAGQLNMRGV (109 aa)). The tract at residues 140-213 (EGQGAGHGHS…PEKLRSDDPV (74 aa)) is disordered. Residues 145-156 (GHGHSHGHGHGH) are 6 X 2 AA approximate repeats of H-G. A compositionally biased stretch (basic residues) spans 147–165 (GHSHGHGHGHLAKGARKAG). The span at 184–196 (TNTLVANTSNSNG) shows a compositional bias: polar residues. Residues 200–211 (DQAEPEKLRSDD) are compositionally biased toward basic and acidic residues. The helical transmembrane segment at 244-264 (FLHVLGDALGSVIVVVNALVF) threads the bilayer. Residues histidine 246 and aspartate 250 each coordinate Zn(2+). At 265–303 (YFNWKGCTEDDFCTNPCFPDPCKSSVEIINSTQAPMRDA) the chain is on the extracellular side. N-linked (GlcNAc...) asparagine glycosylation occurs at asparagine 294. Residues 304 to 324 (GPCWVLYLDPTLCIIMVCILL) traverse the membrane as a helical segment. The Cytoplasmic segment spans residues 325–503 (YTTYPLLKES…VPNKQPESSL (179 aa)). Residue serine 502 is modified to Phosphoserine.

It belongs to the cation diffusion facilitator (CDF) transporter (TC 2.A.4) family. SLC30A subfamily. As to quaternary structure, homodimer. Interacts with TMEM163. Interacts and forms a complex with TMC6 and TMC8; the interaction regulates zinc transport into the ER. In terms of tissue distribution, widely expressed.

It is found in the cell membrane. The protein resides in the basolateral cell membrane. It localises to the cytoplasmic vesicle membrane. Its subcellular location is the cytoplasm. The protein localises to the endoplasmic reticulum membrane. It is found in the golgi apparatus membrane. The protein resides in the nucleus membrane. The catalysed reaction is Zn(2+)(in) + 2 H(+)(out) = Zn(2+)(out) + 2 H(+)(in). Functionally, zinc ion:proton antiporter that could function at the plasma membrane mediating zinc efflux from cells against its electrochemical gradient protecting them from intracellular zinc accumulation and toxicity. Alternatively, could prevent the transport to the plasma membrane of CACNB2, the L-type calcium channels regulatory subunit, through a yet to be defined mechanism. By modulating the expression of these channels at the plasma membrane, could prevent calcium and zinc influx into cells. By the same mechanism, could also prevent L-type calcium channels-mediated heavy metal influx into cells. In some cells, could also function as a zinc ion:proton antiporter mediating zinc entry into the lumen of cytoplasmic vesicles. In macrophages, can increase zinc ions concentration into the lumen of cytoplasmic vesicles containing engulfed bacteria and could help inactivate them. Forms a complex with TMC6/EVER1 and TMC8/EVER2 at the ER membrane of keratynocytes which facilitates zinc uptake into the ER. Down-regulates the activity of transcription factors induced by zinc and cytokines. The polypeptide is Proton-coupled zinc antiporter SLC30A1 (Mus musculus (Mouse)).